Here is a 71-residue protein sequence, read N- to C-terminus: Putative membrane protein insertion efficiency factor (71 aa).

This sequence belongs to the UPF0161 family.

The protein resides in the cell membrane. In terms of biological role, could be involved in insertion of integral membrane proteins into the membrane. In Desulforudis audaxviator (strain MP104C), this protein is Putative membrane protein insertion efficiency factor.